The chain runs to 337 residues: Heat-inducible transcription repressor HrcA (337 aa).

The protein belongs to the HrcA family.

In terms of biological role, negative regulator of class I heat shock genes (grpE-dnaK-dnaJ and groELS operons). Prevents heat-shock induction of these operons. The protein is Heat-inducible transcription repressor HrcA of Metamycoplasma arthritidis (strain 158L3-1) (Mycoplasma arthritidis).